A 479-amino-acid chain; its full sequence is GTPase Obg (479 aa).

One can recognise an Obg domain in the interval 2 to 159 (PRFVDRVVIH…RDLTLELKTV (158 aa)). The 181-residue stretch at 160 to 340 (ADVGLVGFPS…LIFGLWQMVS (181 aa)) folds into the OBG-type G domain. GTP-binding positions include 166-173 (GFPSAGKS), 191-195 (FTTLV), 212-215 (DVPG), 292-295 (NKID), and 321-323 (STV). Mg(2+) is bound by residues S173 and T193. The 79-residue stretch at 358–436 (PVPVDDSGFD…IGEMTFDWEP (79 aa)) folds into the OCT domain. The segment at 438-479 (TPAGGHVAMSGRGTDVRLERSDRVGAAERKAARRQRRERDDD) is disordered. The segment covering 451 to 467 (TDVRLERSDRVGAAERK) has biased composition (basic and acidic residues).

It belongs to the TRAFAC class OBG-HflX-like GTPase superfamily. OBG GTPase family. Monomer. Mg(2+) serves as cofactor.

The protein resides in the cytoplasm. Functionally, an essential GTPase which binds GTP, GDP and possibly (p)ppGpp with moderate affinity, with high nucleotide exchange rates and a fairly low GTP hydrolysis rate. Plays a role in control of the cell cycle, stress response, ribosome biogenesis and in those bacteria that undergo differentiation, in morphogenesis control. The chain is GTPase Obg from Mycobacterium marinum (strain ATCC BAA-535 / M).